Consider the following 650-residue polypeptide: Threonine--tRNA ligase, chloroplastic/mitochondrial 2 (650 aa).

Residues Cys-347, His-398, and His-524 each coordinate Zn(2+).

Belongs to the class-II aminoacyl-tRNA synthetase family.

Its subcellular location is the plastid. It is found in the chloroplast. The protein resides in the mitochondrion. The catalysed reaction is tRNA(Thr) + L-threonine + ATP = L-threonyl-tRNA(Thr) + AMP + diphosphate + H(+). The polypeptide is Threonine--tRNA ligase, chloroplastic/mitochondrial 2 (Arabidopsis thaliana (Mouse-ear cress)).